The chain runs to 156 residues: 3-hydroxyacyl-[acyl-carrier-protein] dehydratase FabZ (156 aa).

Histidine 57 is a catalytic residue.

It belongs to the thioester dehydratase family. FabZ subfamily.

The protein localises to the cytoplasm. It catalyses the reaction a (3R)-hydroxyacyl-[ACP] = a (2E)-enoyl-[ACP] + H2O. Involved in unsaturated fatty acids biosynthesis. Catalyzes the dehydration of short chain beta-hydroxyacyl-ACPs and long chain saturated and unsaturated beta-hydroxyacyl-ACPs. This Anaeromyxobacter dehalogenans (strain 2CP-C) protein is 3-hydroxyacyl-[acyl-carrier-protein] dehydratase FabZ.